Consider the following 365-residue polypeptide: tRNA/tmRNA (uracil-C(5))-methyltransferase (365 aa).

The S-adenosyl-L-methionine site is built by Gln-189, Tyr-217, Asn-222, Glu-238, and Asp-298. Cys-323 serves as the catalytic Nucleophile. The active-site Proton acceptor is the Glu-357.

This sequence belongs to the class I-like SAM-binding methyltransferase superfamily. RNA M5U methyltransferase family. TrmA subfamily.

It carries out the reaction uridine(54) in tRNA + S-adenosyl-L-methionine = 5-methyluridine(54) in tRNA + S-adenosyl-L-homocysteine + H(+). The catalysed reaction is uridine(341) in tmRNA + S-adenosyl-L-methionine = 5-methyluridine(341) in tmRNA + S-adenosyl-L-homocysteine + H(+). Dual-specificity methyltransferase that catalyzes the formation of 5-methyluridine at position 54 (m5U54) in all tRNAs, and that of position 341 (m5U341) in tmRNA (transfer-mRNA). The protein is tRNA/tmRNA (uracil-C(5))-methyltransferase of Shewanella denitrificans (strain OS217 / ATCC BAA-1090 / DSM 15013).